Consider the following 138-residue polypeptide: Peptide methionine sulfoxide reductase MsrB (138 aa).

The MsrB domain occupies 15-137 (EAEWRAQLDP…NSASLGFEPR (123 aa)). Residues cysteine 54, cysteine 57, cysteine 103, and cysteine 106 each coordinate Zn(2+). Cysteine 126 serves as the catalytic Nucleophile.

Belongs to the MsrB Met sulfoxide reductase family. Zn(2+) serves as cofactor.

The catalysed reaction is L-methionyl-[protein] + [thioredoxin]-disulfide + H2O = L-methionyl-(R)-S-oxide-[protein] + [thioredoxin]-dithiol. The sequence is that of Peptide methionine sulfoxide reductase MsrB from Methylibium petroleiphilum (strain ATCC BAA-1232 / LMG 22953 / PM1).